The primary structure comprises 347 residues: N-acetyl-gamma-glutamyl-phosphate reductase (347 aa).

The active site involves C151.

It belongs to the NAGSA dehydrogenase family. Type 1 subfamily.

The protein localises to the cytoplasm. It carries out the reaction N-acetyl-L-glutamate 5-semialdehyde + phosphate + NADP(+) = N-acetyl-L-glutamyl 5-phosphate + NADPH + H(+). The protein operates within amino-acid biosynthesis; L-arginine biosynthesis; N(2)-acetyl-L-ornithine from L-glutamate: step 3/4. Functionally, catalyzes the NADPH-dependent reduction of N-acetyl-5-glutamyl phosphate to yield N-acetyl-L-glutamate 5-semialdehyde. In Corynebacterium aurimucosum (strain ATCC 700975 / DSM 44827 / CIP 107346 / CN-1) (Corynebacterium nigricans), this protein is N-acetyl-gamma-glutamyl-phosphate reductase.